A 572-amino-acid polypeptide reads, in one-letter code: Triacylglycerol lipase OBL1 (572 aa).

The helical transmembrane segment at 110 to 130 threads the bilayer; the sequence is GYLVEFFLNLFSLNGNFLGLL. Positions 320 to 356 are disordered; sequence IPPSESSKSSTSFSDSDAHTGSDLSSDSERPTDTRKK. A compositionally biased stretch (low complexity) spans 323–334; sequence SESSKSSTSFSD. Basic and acidic residues predominate over residues 346–356; sequence DSERPTDTRKK. Positions 391-395 match the GXSXG motif; the sequence is GHSLG. The active-site Nucleophile is the Ser-393. Catalysis depends on charge relay system residues Asp-457 and His-550.

It belongs to the AB hydrolase superfamily. Lipase family. In terms of tissue distribution, expressed in pollen grains and pollen tubes.

The protein resides in the lipid droplet. It is found in the membrane. The enzyme catalyses 1,2-di-(9Z-octadecenoyl)-glycerol + (9Z)-octadecenoate + H(+) = 1,2,3-tri-(9Z-octadecenoyl)-glycerol + H2O. It carries out the reaction 1-(9Z-octadecenoyl)-glycerol + H2O = glycerol + (9Z)-octadecenoate + H(+). Functionally, acid lipase that can hydrolyze a range of triacylglycerols without a clear preference for acyl-chains. Can also cleave 1,2-diacylglycerol, 1,3-diacylglycerol and 1-monoacylglycerol, but not phosphatidylcholine, phosphatidylethanolamine, or sterol esters. Required for pollen tube growth. Triacylglycerol hydrolysis by OBL1 may provide acyl groups for the synthesis of membrane lipids in growing pollen tubes. In Nicotiana tabacum (Common tobacco), this protein is Triacylglycerol lipase OBL1.